Consider the following 130-residue polypeptide: Small ribosomal subunit protein uS11 (130 aa).

It belongs to the universal ribosomal protein uS11 family. As to quaternary structure, part of the 30S ribosomal subunit. Interacts with proteins S7 and S18. Binds to IF-3.

Located on the platform of the 30S subunit, it bridges several disparate RNA helices of the 16S rRNA. Forms part of the Shine-Dalgarno cleft in the 70S ribosome. The chain is Small ribosomal subunit protein uS11 from Bdellovibrio bacteriovorus (strain ATCC 15356 / DSM 50701 / NCIMB 9529 / HD100).